We begin with the raw amino-acid sequence, 246 residues long: Probable transcriptional regulatory protein Rmag_0394 (246 aa).

The protein belongs to the TACO1 family.

The protein resides in the cytoplasm. The chain is Probable transcriptional regulatory protein Rmag_0394 from Ruthia magnifica subsp. Calyptogena magnifica.